The sequence spans 494 residues: UPF0371 protein spyM18_1356 (494 aa).

This sequence belongs to the UPF0371 family.

The chain is UPF0371 protein spyM18_1356 from Streptococcus pyogenes serotype M18 (strain MGAS8232).